A 323-amino-acid polypeptide reads, in one-letter code: Mitochondrial glutamate carrier 1 (323 aa).

Solcar repeat units follow at residues 6 to 93 (ISLP…FRHQ), 101 to 214 (LTLL…LNQL), and 223 to 312 (SPFY…GIAE). 6 helical membrane-spanning segments follow: residues 12–32 (LING…IDLA), 62–82 (YFGM…EKAI), 107–127 (MLAG…MEML), 189–209 (GLGA…PLFA), 223–243 (SPFY…AVAV), and 292–312 (ALVI…GIAE).

It belongs to the mitochondrial carrier (TC 2.A.29) family. As to expression, expressed at high levels in brain, liver, and pancreas.

The protein resides in the mitochondrion inner membrane. The catalysed reaction is L-glutamate(in) + H(+)(in) = L-glutamate(out) + H(+)(out). Its function is as follows. Mitochondrial glutamate/H(+) symporter. Responsible for the transport of glutamate from the cytosol into the mitochondrial matrix with the concomitant import of a proton. Plays a role in the control of glucose-stimulated insulin secretion. The sequence is that of Mitochondrial glutamate carrier 1 from Homo sapiens (Human).